The primary structure comprises 79 residues: UPF0401 protein YkfF (79 aa).

Belongs to the UPF0401 family.

The polypeptide is UPF0401 protein YkfF (ykfF) (Escherichia coli (strain K12)).